We begin with the raw amino-acid sequence, 474 residues long: Cytochrome c-552 (474 aa).

The first 29 residues, 1-29, serve as a signal peptide directing secretion; that stretch reads MSIKHWMASSVSVTALVMTALLNITAVSA. Residue H91 participates in heme c binding. Heme is bound by residues C119, C122, and K123. Heme c contacts are provided by C157, C160, H161, C206, C209, and H210. E212, Y213, K258, and Q260 together coordinate Ca(2+). Y213 is a substrate binding site. H261 is a substrate binding site. Heme c contacts are provided by H272, C279, C282, H283, H298, C311, C314, H315, and H390.

This sequence belongs to the cytochrome c-552 family. Ca(2+) is required as a cofactor. It depends on heme c as a cofactor.

Its subcellular location is the periplasm. It catalyses the reaction 6 Fe(III)-[cytochrome c] + NH4(+) + 2 H2O = 6 Fe(II)-[cytochrome c] + nitrite + 8 H(+). It functions in the pathway nitrogen metabolism; nitrate reduction (assimilation). Catalyzes the reduction of nitrite to ammonia, consuming six electrons in the process. The sequence is that of Cytochrome c-552 from Vibrio vulnificus (strain CMCP6).